The primary structure comprises 369 residues: Virulence factor-related M protein (369 aa).

The N-terminal stretch at methionine 1–alanine 41 is a signal peptide. C repeat units lie at residues alanine 120–histidine 154, lysine 162–tyrosine 196, and glutamine 211–leucine 246. Basic and acidic residues-rich tracts occupy residues glutamate 125–threonine 165, aspartate 202–lysine 219, leucine 228–threonine 243, and glutamate 257–glutamine 271. Disordered regions lie at residues glutamate 125 to lysine 189 and aspartate 202 to glutamine 271. A 2 X repeats, type A region spans residues serine 129–glutamate 200. Positions serine 132–lysine 241 are 3 X repeats, type B. 4 D repeats span residues alanine 272–glutamine 277, glycine 278–glutamate 283, alanine 286–glutamate 291, and alanine 293–glutamate 298. Residues leucine 292–alanine 301 are compositionally biased toward basic and acidic residues. The segment at leucine 292–glutamate 341 is disordered. Residues alanine 319 to serine 338 show a composition bias toward polar residues. Residues leucine 336 to glycine 340 carry the LPXTG sorting signal motif. Pentaglycyl murein peptidoglycan amidated threonine is present on threonine 339. The propeptide at glycine 340 to asparagine 369 is removed by sortase.

It belongs to the M protein family.

It is found in the secreted. Its subcellular location is the cell wall. In Streptococcus pyogenes serotype M49, this protein is Virulence factor-related M protein (ennX).